Here is a 258-residue protein sequence, read N- to C-terminus: Type III pantothenate kinase (258 aa).

Residue 6–13 participates in ATP binding; that stretch reads DVGNTNTV. Substrate-binding positions include Tyr100 and 107 to 110; that span reads GADR. Catalysis depends on Asp109, which acts as the Proton acceptor. Asp129 contributes to the K(+) binding site. ATP is bound at residue Thr132. Thr184 is a substrate binding site.

Belongs to the type III pantothenate kinase family. In terms of assembly, homodimer. The cofactor is NH4(+). It depends on K(+) as a cofactor.

The protein resides in the cytoplasm. The enzyme catalyses (R)-pantothenate + ATP = (R)-4'-phosphopantothenate + ADP + H(+). It functions in the pathway cofactor biosynthesis; coenzyme A biosynthesis; CoA from (R)-pantothenate: step 1/5. Not regulated by feedback inhibition by CoA and its thioesters as described for many other pantothenate kinases. Not inhibited by N-pentylpantothenamide (N5-Pan), and this compound cannot act as a substrate either. In terms of biological role, catalyzes the phosphorylation of pantothenate (Pan), the first step in CoA biosynthesis. Cannot utilize a phosphoryl donor other than ATP. This is Type III pantothenate kinase (coaX) from Bacillus subtilis (strain 168).